The following is a 592-amino-acid chain: Cryptochrome-2 (592 aa).

The 130-residue stretch at 21–150 (ASSVHWFRKG…EVVTENSHTL (130 aa)) folds into the Photolyase/cryptochrome alpha/beta domain. Lys29 is covalently cross-linked (Glycyl lysine isopeptide (Lys-Gly) (interchain with G-Cter in ubiquitin)). At Ser89 the chain carries Phosphoserine. Glycyl lysine isopeptide (Lys-Gly) (interchain with G-Cter in ubiquitin) cross-links involve residues Lys125 and Lys241. At Ser265 the chain carries Phosphoserine; by MAPK. Ser270 provides a ligand contact to FAD. Position 298 is a phosphoserine (Ser298). Residue Gln307 coordinates FAD. A Glycyl lysine isopeptide (Lys-Gly) (interchain with G-Cter in ubiquitin) cross-link involves residue Lys347. FAD contacts are provided by residues His373 and 405–407 (DAD). Residues 389-488 (WVSWESGVRV…IIGVDYPRPI (100 aa)) are required for inhibition of CLOCK-BMAL1-mediated transcription. Glycyl lysine isopeptide (Lys-Gly) (interchain with G-Cter in ubiquitin) cross-links involve residues Lys474 and Lys503. Positions 532 to 592 (VAEPGSSQAG…PTQEPASKDS (61 aa)) are disordered. Polar residues predominate over residues 536–547 (GSSQAGSISNTG). Ser553 carries the phosphoserine; by GSK3-beta modification. The residue at position 557 (Ser557) is a Phosphoserine; by DYRK1A and MAPK. The segment covering 582-592 (MPTQEPASKDS) has biased composition (polar residues).

Belongs to the DNA photolyase class-1 family. As to quaternary structure, component of the circadian core oscillator, which includes the CRY proteins, CLOCK or NPAS2, BMAL1 or BMAL2, CSNK1D and/or CSNK1E, TIMELESS, and the PER proteins. Interacts with TIMELESS. Interacts directly with PER1, PER2 and PER3; interaction with PER2 inhibits its ubiquitination and vice versa. Interacts with CLOCK-BMAL1. Interacts with BMAL1. Interacts with CLOCK. Interacts with NFIL3. Interacts with FBXL3 and FBXL21. FBXL3, PER2 and the cofactor FAD compete for overlapping binding sites. FBXL3 cannot bind CRY2 that interacts already with PER2 or that contains bound FAD. Interacts with PPP5C (via TPR repeats); the interaction down-regulates the PPP5C phosphatase activity on CSNK1E. Interacts with nuclear receptors AR and NR3C1/GR; the interaction is ligand dependent. Interacts with PRKDC. Interacts with CIART. Interacts with DDB1, USP7 and TARDBP. Interacts with HNF4A. Interacts with PPARA. Interacts with PPARG in a ligand-dependent manner. Interacts with PPARD (via domain NR LBD) in a ligand-dependent manner. Interacts with NR1I2 (via domain NR LBD) in a ligand-dependent manner. Interacts with NR1I3 and VDR in a ligand-dependent manner. Requires FAD as cofactor. (6R)-5,10-methylene-5,6,7,8-tetrahydrofolate serves as cofactor. Post-translationally, phosphorylation on Ser-265 by MAPK is important for the inhibition of CLOCK-BMAL1-mediated transcriptional activity. Phosphorylation by CSKNE requires interaction with PER1 or PER2. Phosphorylated in a circadian manner at Ser-553 and Ser-557 in the suprachiasmatic nucleus (SCN) and liver. Phosphorylation at Ser-557 by DYRK1A promotes subsequent phosphorylation at Ser-553 by GSK3-beta: the two-step phosphorylation at the neighboring Ser residues leads to its proteasomal degradation. Ubiquitinated by the SCF(FBXL3) and SCF(FBXL21) complexes, regulating the balance between degradation and stabilization. The SCF(FBXL3) complex is mainly nuclear and mediates ubiquitination and subsequent degradation of CRY2. In contrast, cytoplasmic SCF(FBXL21) complex-mediated ubiquitination leads to stabilize CRY2 and counteract the activity of the SCF(FBXL3) complex. The SCF(FBXL3) and SCF(FBXL21) complexes probably mediate ubiquitination at different Lys residues. The SCF(FBXL3) complex recognizes and binds CRY2 phosphorylated at Ser-553 and Ser-557. Ubiquitination may be inhibited by PER2. Deubiquitinated by USP7. In terms of tissue distribution, expression in the retina is restricted to the photoreceptor layer (at protein level). Expressed in all tissues examined including heart, brain, spleen, lung, liver, skeletal muscle, kidney and testis. Weak expression in spleen.

The protein resides in the cytoplasm. Its subcellular location is the nucleus. With respect to regulation, KL001 (N-[3-(9H-carbazol-9-yl)-2-hydroxypropyl]-N-(2-furanylmethyl)-methanesulfonamide) binds to CRY1 and stabilizes it by inhibiting FBXL3- and ubiquitin-dependent degradation of CRY1 resulting in lengthening of the circadian periods. KL001-mediated CRY1 stabilization can inhibit glucagon-induced gluconeogenesis in primary hepatocytes. Transcriptional repressor which forms a core component of the circadian clock. The circadian clock, an internal time-keeping system, regulates various physiological processes through the generation of approximately 24 hour circadian rhythms in gene expression, which are translated into rhythms in metabolism and behavior. It is derived from the Latin roots 'circa' (about) and 'diem' (day) and acts as an important regulator of a wide array of physiological functions including metabolism, sleep, body temperature, blood pressure, endocrine, immune, cardiovascular, and renal function. Consists of two major components: the central clock, residing in the suprachiasmatic nucleus (SCN) of the brain, and the peripheral clocks that are present in nearly every tissue and organ system. Both the central and peripheral clocks can be reset by environmental cues, also known as Zeitgebers (German for 'timegivers'). The predominant Zeitgeber for the central clock is light, which is sensed by retina and signals directly to the SCN. The central clock entrains the peripheral clocks through neuronal and hormonal signals, body temperature and feeding-related cues, aligning all clocks with the external light/dark cycle. Circadian rhythms allow an organism to achieve temporal homeostasis with its environment at the molecular level by regulating gene expression to create a peak of protein expression once every 24 hours to control when a particular physiological process is most active with respect to the solar day. Transcription and translation of core clock components (CLOCK, NPAS2, BMAL1, BMAL2, PER1, PER2, PER3, CRY1 and CRY2) plays a critical role in rhythm generation, whereas delays imposed by post-translational modifications (PTMs) are important for determining the period (tau) of the rhythms (tau refers to the period of a rhythm and is the length, in time, of one complete cycle). A diurnal rhythm is synchronized with the day/night cycle, while the ultradian and infradian rhythms have a period shorter and longer than 24 hours, respectively. Disruptions in the circadian rhythms contribute to the pathology of cardiovascular diseases, cancer, metabolic syndromes and aging. A transcription/translation feedback loop (TTFL) forms the core of the molecular circadian clock mechanism. Transcription factors, CLOCK or NPAS2 and BMAL1 or BMAL2, form the positive limb of the feedback loop, act in the form of a heterodimer and activate the transcription of core clock genes and clock-controlled genes (involved in key metabolic processes), harboring E-box elements (5'-CACGTG-3') within their promoters. The core clock genes: PER1/2/3 and CRY1/2 which are transcriptional repressors form the negative limb of the feedback loop and interact with the CLOCK|NPAS2-BMAL1|BMAL2 heterodimer inhibiting its activity and thereby negatively regulating their own expression. This heterodimer also activates nuclear receptors NR1D1/2 and RORA/B/G, which form a second feedback loop and which activate and repress BMAL1 transcription, respectively. CRY1 and CRY2 have redundant functions but also differential and selective contributions at least in defining the pace of the SCN circadian clock and its circadian transcriptional outputs. Less potent transcriptional repressor in cerebellum and liver than CRY1, though less effective in lengthening the period of the SCN oscillator. Seems to play a critical role in tuning SCN circadian period by opposing the action of CRY1. With CRY1, dispensable for circadian rhythm generation but necessary for the development of intercellular networks for rhythm synchrony. May mediate circadian regulation of cAMP signaling and gluconeogenesis by blocking glucagon-mediated increases in intracellular cAMP concentrations and in CREB1 phosphorylation. Besides its role in the maintenance of the circadian clock, is also involved in the regulation of other processes. Plays a key role in glucose and lipid metabolism modulation, in part, through the transcriptional regulation of genes involved in these pathways, such as LEP or ACSL4. Represses glucocorticoid receptor NR3C1/GR-induced transcriptional activity by binding to glucocorticoid response elements (GREs). Represses the CLOCK-BMAL1 induced transcription of BHLHE40/DEC1 and NAMPT. Represses PPARD and its target genes in the skeletal muscle and limits exercise capacity. Represses the transcriptional activity of NR1I2. In Mus musculus (Mouse), this protein is Cryptochrome-2 (Cry2).